The following is a 304-amino-acid chain: Small ribosomal subunit protein uS3 (304 aa).

Residues 17–86 (MDEYFAKQLS…NPQIDAQEVK (70 aa)) form the KH type-2 domain.

This sequence belongs to the universal ribosomal protein uS3 family. As to quaternary structure, part of the 30S ribosomal subunit.

In terms of biological role, binds the lower part of the 30S subunit head. The chain is Small ribosomal subunit protein uS3 from Methanococcoides burtonii (strain DSM 6242 / NBRC 107633 / OCM 468 / ACE-M).